We begin with the raw amino-acid sequence, 576 residues long: Urease subunit alpha (576 aa).

One can recognise a Urease domain in the interval 132–576 (GGVDTHIHFI…LPMAQRYFLF (445 aa)). Ni(2+) is bound by residues H137, H139, and K220. Residue K220 is modified to N6-carboxylysine. H222 contributes to the substrate binding site. Positions 249 and 275 each coordinate Ni(2+). H323 functions as the Proton donor in the catalytic mechanism. Position 363 (D363) interacts with Ni(2+).

The protein belongs to the metallo-dependent hydrolases superfamily. Urease alpha subunit family. Heterotrimer of UreA (gamma), UreB (beta) and UreC (alpha) subunits. Three heterotrimers associate to form the active enzyme. Ni cation serves as cofactor. In terms of processing, carboxylation allows a single lysine to coordinate two nickel ions.

The protein localises to the cytoplasm. It carries out the reaction urea + 2 H2O + H(+) = hydrogencarbonate + 2 NH4(+). It functions in the pathway nitrogen metabolism; urea degradation; CO(2) and NH(3) from urea (urease route): step 1/1. The polypeptide is Urease subunit alpha (Arthrobacter sp. (strain FB24)).